The sequence spans 591 residues: V-type ATP synthase alpha chain (591 aa).

ATP is bound at residue 233–240 (GPFGAGKT).

The protein belongs to the ATPase alpha/beta chains family.

The enzyme catalyses ATP + H2O + 4 H(+)(in) = ADP + phosphate + 5 H(+)(out). In terms of biological role, produces ATP from ADP in the presence of a proton gradient across the membrane. The V-type alpha chain is a catalytic subunit. The sequence is that of V-type ATP synthase alpha chain from Streptococcus pyogenes serotype M5 (strain Manfredo).